Consider the following 881-residue polypeptide: NACHT, LRR and PYD domains-containing protein 6 (881 aa).

In terms of domain architecture, Pyrin spans methionine 1–valine 129. Residue serine 104 is modified to Phosphoserine. Positions alanine 154–aspartate 175 are disordered. The region spanning leucine 194–leucine 510 is the NACHT domain. Glycine 200–threonine 207 contributes to the ATP binding site. One copy of the LRR 1 repeat lies at glutamate 459–glycine 484. A disordered region spans residues glutamine 579–glutamate 611. The segment covering lysine 596–glutamate 611 has biased composition (acidic residues). LRR repeat units follow at residues leucine 637 to tyrosine 660, alanine 749 to glutamine 772, and threonine 839 to proline 863.

The protein belongs to the NLRP family. Homomultimer; forms the NLRP6 inflammasome polymeric complex, a filament composed of homopolymers in response to pathogens and other damage-associated signals. The core of NLRP6 inflammasomes consists of a signal sensor component (NLRP6), an adapter (PYCARD/ASC), which recruits effector pro-inflammatory caspases (CASP1 and CASP4). Interacts (via pyrin domain) with PYCARD/ASC (via pyrin domain); interaction takes place following NLRP6 activation and formation of liquid-liquid phase separation (LLPS), initiating nucleation which greatly enhances further addition of soluble PYCARD/ASC molecules to the speck in a prion-like polymerization process. Clustered PYCARD/ASC nucleates the formation of CASP1 (or possibly CASP4) filaments through the interaction of their respective CARD domains, acting as a platform for CASP1 polymerization. CASP1 filament formation increases local enzyme concentration, resulting in trans-autocleavage and activation. Active CASP1 then processes IL1B and IL18 precursors, leading to the release of mature cytokines in the extracellular milieu and inflammatory response. Interacts with DHX15. Post-translationally, polyubiquitinated with 'Lys-63'-linked chains, promoting the interaction with PYCARD/ASC and formation of the NLRP6 inflammasome. Deubiquitination by CYLD decreases the interaction with PYCARD/ASC. Detected in several tissues. Expressed in renal epithelial cells in medullary thick ascending limb of Henle, as well as in salivary gland apical epithelium (at protein level). Isoform 1 is widely expressed. Isoform 2 is primarily expressed in kidney (at protein level).

Its subcellular location is the cytoplasm. The protein resides in the inflammasome. It localises to the cell membrane. The protein localises to the nucleus membrane. Functionally, acts as the sensor component of the NLRP6 inflammasome, which mediates inflammasome activation in response to various pathogen-associated signals, leading to maturation and secretion of IL1B and IL18. Inflammasomes are supramolecular complexes that assemble in the cytosol in response to pathogens and other damage-associated signals and play critical roles in innate immunity and inflammation. Acts as a recognition receptor (PRR): recognizes and binds specific pathogens and other damage-associated signals, such as lipoteichoic acid (LTA), a cell-wall component of Gram-positive bacteria, or double stranded RNA (dsRNA). May also recognize and bind lipopolysaccharide (LPS), a major component of the outer membrane of Gram-negative bacteria; however, LPS is probably not a major activator of the NLRP6 inflammasome. Following LTA- or dsRNA-binding, NLRP6 undergoes liquid-liquid phase separation (LLPS), enhancing multivalent interactions, an essential step for the formation of the NLRP6 inflammasome polymeric complex. The NLRP6 inflammasome acts by promoting recruitment of effector pro-inflammatory caspases (CASP1 and/or CASP4) that catalyze maturation and secretion of IL1B and IL18 in the extracellular milieu. The NLRP6 inflammasome plays a central role in the maintenance of epithelial integrity and host defense against microbial infections in the intestine. Required to restrict infection against Gram-positive bacteria by recognizing lipoteichoic acid (LTA), leading to recruitment of CASP4 and CASP1, and subsequent maturation and secretion of IL1B and IL18. Involved in intestinal antiviral innate immunity together with DHX15: recognizes and binds viral dsRNA to restrict infection by enteric viruses through the interferon pathway and GSDMD-dependent release of IL18. Required to prevent infection by the apicomplexan parasite Cryptosporidium in enterocytes by promoting GSDMD-dependent release of IL18. The NLRP6 inflammasome may also regulate the gut microbiota composition by acting as a sensor of microbiota-associated metabolites to form a PYCARD/ASC-dependent inflammasome for downstream IL18 release and secretion of antimicrobial peptides. Essential for gut mucosal self-renewal and proliferation. Regulate mucus secretion in an inflammasome- and autophagy-dependent manner to prevent invasion by enteric bacteria,. During systemic bacterial infections, the NLRP6 inflammasome negatively regulates neutrophil recruitment and neutrophil extracellular traps (NETs) formation. May promote peripheral nerve recovery following injury via an inflammasome-independent mechanism. This Rattus norvegicus (Rat) protein is NACHT, LRR and PYD domains-containing protein 6.